We begin with the raw amino-acid sequence, 245 residues long: Octanoyltransferase (245 aa).

The BPL/LPL catalytic domain maps to 54 to 238; that stretch reads GEATELVWLL…AFENIFGETR (185 aa). Residues 92–99, 167–169, and 180–182 each bind substrate; these read RGGQLTYH, AIG, and GIA. The active-site Acyl-thioester intermediate is the Cys-198.

Belongs to the LipB family.

The protein localises to the cytoplasm. It carries out the reaction octanoyl-[ACP] + L-lysyl-[protein] = N(6)-octanoyl-L-lysyl-[protein] + holo-[ACP] + H(+). It functions in the pathway protein modification; protein lipoylation via endogenous pathway; protein N(6)-(lipoyl)lysine from octanoyl-[acyl-carrier-protein]: step 1/2. In terms of biological role, catalyzes the transfer of endogenously produced octanoic acid from octanoyl-acyl-carrier-protein onto the lipoyl domains of lipoate-dependent enzymes. Lipoyl-ACP can also act as a substrate although octanoyl-ACP is likely to be the physiological substrate. The polypeptide is Octanoyltransferase (Rhodopseudomonas palustris (strain TIE-1)).